A 119-amino-acid polypeptide reads, in one-letter code: Large ribosomal subunit protein uL18 (119 aa).

It belongs to the universal ribosomal protein uL18 family. In terms of assembly, part of the 50S ribosomal subunit; part of the 5S rRNA/L5/L18/L25 subcomplex. Contacts the 5S and 23S rRNAs.

Functionally, this is one of the proteins that bind and probably mediate the attachment of the 5S RNA into the large ribosomal subunit, where it forms part of the central protuberance. The protein is Large ribosomal subunit protein uL18 of Clostridium beijerinckii (strain ATCC 51743 / NCIMB 8052) (Clostridium acetobutylicum).